An 876-amino-acid chain; its full sequence is Alanine--tRNA ligase (876 aa).

The residue at position 74 (lysine 74) is an N6-acetyllysine. Histidine 564, histidine 568, cysteine 666, and histidine 670 together coordinate Zn(2+).

This sequence belongs to the class-II aminoacyl-tRNA synthetase family. As to quaternary structure, homotetramer. Requires Zn(2+) as cofactor.

The protein resides in the cytoplasm. The enzyme catalyses tRNA(Ala) + L-alanine + ATP = L-alanyl-tRNA(Ala) + AMP + diphosphate. In terms of biological role, catalyzes the attachment of alanine to tRNA(Ala) in a two-step reaction: alanine is first activated by ATP to form Ala-AMP and then transferred to the acceptor end of tRNA(Ala). Also edits incorrectly charged Ser-tRNA(Ala) and Gly-tRNA(Ala) via its editing domain. This chain is Alanine--tRNA ligase, found in Escherichia coli O1:K1 / APEC.